The chain runs to 616 residues: uncharacterized protein (616 aa).

Disordered regions lie at residues 166–243 (SRTY…TPEL) and 272–298 (DHEEEEGQDDDEETEIEIDRGGPIEEI). The segment covering 184–200 (RVDESRPSENSSRHDYV) has biased composition (basic and acidic residues). Residues 221 to 237 (TRTSNVTQTQPPTNQVF) show a composition bias toward polar residues. Residues 272 to 287 (DHEEEEGQDDDEETEI) are compositionally biased toward acidic residues. The 75-residue stretch at 343–417 (ILIKLKFMND…VHCHISTTPY (75 aa)) folds into the Ubiquitin-like domain.

This is an uncharacterized protein from Caenorhabditis elegans.